We begin with the raw amino-acid sequence, 668 residues long: WD repeat-containing protein 48 homolog (668 aa).

WD repeat units lie at residues 26–65 (QHRN…SEKY), 71–110 (HHND…CMST), 113–152 (THRD…ALTA), 164–203 (GSKD…RRMK), 206–245 (GHTE…CVQT), 248–287 (VHKE…NKTL), 290–329 (EEQA…RCTL), and 350–389 (KGGA…KKEQ). The segment at 592-616 (ETTPSGGNANNSLQNSQSDANSEGS) is disordered.

Belongs to the WD repeat WDR48 family. Catalytic component of the Usp12-46 deubiquitylase complex consisting of Usp12-46, Wdr20 and Uaf1; regulatory subunit that, together wtih Wdr20, stabilizes Usp12-46. The Usp12-46 deubiquitylase complex associates with arr/arrow; the interaction leads to deubiquitination and stabilization of arr/arrow.

Its function is as follows. Regulatory component of the Usp12-46 deubiquitylase complex. activates deubiquitination by increasing the catalytic turnover without increasing the affinity of deubiquitinating enzymes for the substrate. The complex deubiquitylates the wg/wingless-signaling receptor arr/arrow, which stabilizes the receptor and increases its concentration at the cell surface; this enhances the sensitivity of cells to wg/wingless-signal stimulation. This increases the amplitude and spatial range of the signaling response to the wg/wingless morphogen gradient, facilitating the precise concentration-dependent regulation of its target genes. Together with Wdr20 and Usp12-46 required for wg/wingless-mediated signaling in the wing imaginal disc and for wg/wingless-dependent regulation of intestinal stem cell proliferation. The sequence is that of WD repeat-containing protein 48 homolog from Drosophila melanogaster (Fruit fly).